The sequence spans 102 residues: MLDFYILVALILFFIGVLGVILRKNIFTIFMSVELMLNATALIFATFARQSLNLDGQVIVMLIIAIAAAEASFGLALIVLLYKKKQSLNIDIFDELKDRDVS.

A run of 3 helical transmembrane segments spans residues 2-22 (LDFYILVALILFFIGVLGVIL), 26-46 (IFTIFMSVELMLNATALIFAT), and 58-78 (VIVMLIIAIAAAEASFGLALI).

The protein belongs to the complex I subunit 4L family. In terms of assembly, NDH-1 is composed of 14 different subunits. Subunits NuoA, H, J, K, L, M, N constitute the membrane sector of the complex.

Its subcellular location is the cell inner membrane. The catalysed reaction is a quinone + NADH + 5 H(+)(in) = a quinol + NAD(+) + 4 H(+)(out). NDH-1 shuttles electrons from NADH, via FMN and iron-sulfur (Fe-S) centers, to quinones in the respiratory chain. The immediate electron acceptor for the enzyme in this species is believed to be ubiquinone. Couples the redox reaction to proton translocation (for every two electrons transferred, four hydrogen ions are translocated across the cytoplasmic membrane), and thus conserves the redox energy in a proton gradient. In Campylobacter fetus subsp. fetus (strain 82-40), this protein is NADH-quinone oxidoreductase subunit K.